A 239-amino-acid chain; its full sequence is Ribosomal RNA small subunit methyltransferase G (239 aa).

Residues Gly75, Leu80, 126 to 127, and Arg142 each bind S-adenosyl-L-methionine; that span reads AE.

Belongs to the methyltransferase superfamily. RNA methyltransferase RsmG family.

It is found in the cytoplasm. Specifically methylates the N7 position of guanine in position 518 of 16S rRNA. The sequence is that of Ribosomal RNA small subunit methyltransferase G from Streptomyces coelicolor (strain ATCC BAA-471 / A3(2) / M145).